The chain runs to 273 residues: DNA repair protein RecO (273 aa).

This sequence belongs to the RecO family.

Functionally, involved in DNA repair and RecF pathway recombination. In Mycolicibacterium gilvum (strain PYR-GCK) (Mycobacterium gilvum (strain PYR-GCK)), this protein is DNA repair protein RecO.